The sequence spans 486 residues: Probable glucan endo-1,3-beta-glucosidase eglC (486 aa).

The signal sequence occupies residues 1 to 18 (MQLTQLLALALSLATSEA). N-linked (GlcNAc...) asparagine glycosylation occurs at Asn-84. Glu-128 acts as the Proton donor in catalysis. Asn-183 carries N-linked (GlcNAc...) asparagine glycosylation. Glu-239 acts as the Nucleophile in catalysis. Residues Asn-315, Asn-386, Asn-396, and Asn-404 are each glycosylated (N-linked (GlcNAc...) asparagine). The disordered stretch occupies residues 330-458 (AAAGGVAGGS…SSGAASPSST (129 aa)). Low complexity-rich tracts occupy residues 341–404 (GSAS…HGSN) and 413–424 (SVSNVSPSKSSS). Residues 430-442 (AATSMGASPSSVG) are compositionally biased toward polar residues. Low complexity predominate over residues 445-458 (GPSKSSGAASPSST). Gly-463 carries the GPI-anchor amidated glycine lipid modification. The propeptide at 464–486 (AATSVSAPVVHVVLLALMMVIAA) is removed in mature form.

Belongs to the glycosyl hydrolase 17 family. Post-translationally, the GPI-anchor is attached to the protein in the endoplasmic reticulum and serves to target the protein to the cell surface. There, the glucosamine-inositol phospholipid moiety is cleaved off and the GPI-modified mannoprotein is covalently attached via its lipidless GPI glycan remnant to the 1,6-beta-glucan of the outer cell wall layer.

The protein localises to the cell membrane. It is found in the secreted. The protein resides in the cell wall. The catalysed reaction is Hydrolysis of (1-&gt;3)-beta-D-glucosidic linkages in (1-&gt;3)-beta-D-glucans.. In terms of biological role, glucanases play a role in cell expansion during growth, in cell-cell fusion during mating, and in spore release during sporulation. This enzyme may be involved in beta-glucan degradation and also function biosynthetically as a transglycosylase. This is Probable glucan endo-1,3-beta-glucosidase eglC (eglC) from Aspergillus terreus (strain NIH 2624 / FGSC A1156).